The following is a 141-amino-acid chain: Large ribosomal subunit protein uL16 (141 aa).

The protein belongs to the universal ribosomal protein uL16 family. As to quaternary structure, part of the 50S ribosomal subunit.

Its function is as follows. Binds 23S rRNA and is also seen to make contacts with the A and possibly P site tRNAs. The chain is Large ribosomal subunit protein uL16 from Hydrogenobaculum sp. (strain Y04AAS1).